A 511-amino-acid chain; its full sequence is MRFTLYGLLGFASLLHAAPIAENLSTTLKSLNVNPADFSLWDQRNFLGNPRLTCVVLEKLFGSKSTGVYESGYTALTEITWSQTCWVNPACIVSPANAQDVSKAIIVLRALQTKFSVRSGGHMANPGFSSAGPDAVLISLSNLTKLSLSSDKSIATIGVGNRWGAVYNYLQPYNVTVIGGRIGTVGSALVLGGGLNYFSGQFGLSADTVERFQVVLSDGSIVTATRTKNSDLFQALKGGSANFGIVTEFDLRTRYSGPLYYEAVLYPGDQYPALMKALVEYQRNGSLDTKASLVTSFRVEGNLVVFLYLDPVIRPSAFDPFYSVPSIPFFPPGFATITELVAALGIGFSSEPERDATRVTSFETDESILNYSYGIWQQVVATLPANASLEWVPQPIGAGLKAKGDQYGGNILGLPAKNHIWLDIVAKWKNPADDAFVLNASKFILDKTDAFAKSKNKYLPYLFMNDAYADQKVLRSYGTTNFNKIVQVSKKYDPSQTFQKLQGNGYLWTRE.

Residues 1-17 (MRFTLYGLLGFASLLHA) form the signal peptide. The FAD-binding PCMH-type domain maps to 85–256 (CWVNPACIVS…TEFDLRTRYS (172 aa)). Residue His-122 is modified to Pros-8alpha-FAD histidine.

This sequence belongs to the oxygen-dependent FAD-linked oxidoreductase family.

It functions in the pathway secondary metabolite biosynthesis; terpenoid biosynthesis. In terms of biological role, FAD-dependent monooxygenase; part of the gene cluster that mediates the biosynthesis of sesquiterpenyl epoxy-cyclohexenoids (SECs) such as anthrobotrisins and arthrosporols, metabolites that possess a novel hybrid carbon skeleton consisting of a polyketide-derived epoxycyclohexenol combined with a terpenoid-derived monocyclic sesquiterpenol substructure (PKS-PTS hybrid). The SEC pathway plays an important role for fungal soil colonization via decreasing fungal nematode-capturing ability. Within the pathway, the FAD-dependent monooxygenase AOL_s00215g279 plays a role in the oxygenation of the phenol moiety, most likely in the epoxy formation. The pathway begins with the biosynthesis of 6-methylsalicylic acid (6-MSA), the first precursor of the polyketide-derived epoxycyclohexenol in arthrosporols, by the polyketide synthase (PKS) AOL_s00215g283 via condensation of 1 acetate and 3 malonate units. The 6-methylsalicylic acid decarboxylase AOL_s00215g281 then catalyzes the decarboxylation of 6-methylsalicylic acid to yield m-cresol. The cytochrome P450 monooxygenase AOL_s00215g282 further oxidizes m-cresol to yield toluquinol. With the assistance of the oxidoreductase AOL_s00215g277, the polyprenyl transferase AOL_s00215g276 catalyzes the farnesylation of toluquinol to produce farnesyl hydroquinone, the hybrid precursor for biosynthesis of SECs. Farnesyl hydroquinone undergoes epoxidation and then subsequent dehydrogenation to form farnesyl epoxy-quinone, the first and simplest SEC. The cytochrome P450 monooxygenase AOL_s00215g278 and the FAD-dependent monooxygenase AOL_s00215g279 might be involved in the oxygenation of the phenol moiety, most likely in the epoxy formation. The cytochrome P450 monooxygenases AOL_s00215g274 and AOL_s00215g280 are involved in specific regional ketone reductions at respectively C-4 and C-1 of farnesyl epoxy-quinone PubMed:33823587. This Arthrobotrys oligospora (strain ATCC 24927 / CBS 115.81 / DSM 1491) (Nematode-trapping fungus) protein is FAD-dependent monooxygenase AOL_s00215g279.